The following is a 513-amino-acid chain: ATP synthase subunit alpha (513 aa).

ATP is bound at residue 171 to 178 (GDRQIGKT).

Belongs to the ATPase alpha/beta chains family. In terms of assembly, F-type ATPases have 2 components, CF(1) - the catalytic core - and CF(0) - the membrane proton channel. CF(1) has five subunits: alpha(3), beta(3), gamma(1), delta(1), epsilon(1). CF(0) has three main subunits: a(1), b(2) and c(9-12). The alpha and beta chains form an alternating ring which encloses part of the gamma chain. CF(1) is attached to CF(0) by a central stalk formed by the gamma and epsilon chains, while a peripheral stalk is formed by the delta and b chains.

Its subcellular location is the cell membrane. It carries out the reaction ATP + H2O + 4 H(+)(in) = ADP + phosphate + 5 H(+)(out). Functionally, produces ATP from ADP in the presence of a proton gradient across the membrane. The alpha chain is a regulatory subunit. The sequence is that of ATP synthase subunit alpha from Wolbachia pipientis wMel.